We begin with the raw amino-acid sequence, 943 residues long: Mechanosensitive ion channel protein BA (943 aa).

A disordered region spans residues 1 to 67 (MPNPNDVTID…PPSSSLGFGH (67 aa)). The Cytoplasmic portion of the chain corresponds to 1–107 (MPNPNDVTID…AVLNFSTVTR (107 aa)). The span at 14 to 37 (TSVSSRGQTGARNNSTNIPNSPSG) shows a compositional bias: polar residues. The helical transmembrane segment at 108–130 (YLIYIAPLAALLAIPIIVGATAA) threads the bilayer. Topologically, residues 131–149 (EDAKIGGVSLPWFFCWVEV) are lumenal. The helical transmembrane segment at 150-175 (VWVSLWVCKLVAKVIPFVFQFVCGIV) threads the bilayer. At 176–195 (SAGTRKYALILRNLEIPITM) the chain is on the cytoplasmic side. The chain crosses the membrane as a helical span at residues 196–214 (VLWMIVSLVTFLPIMVYNP). The Lumenal portion of the chain corresponds to 215–233 (RNKREGDTETKSWEKSVKN). A helical transmembrane segment spans residues 234 to 259 (VLFAFLVCALIFLGEKTLVQLISISY). The Cytoplasmic portion of the chain corresponds to 260–468 (HRKQFDARIK…DQAIHVLDNL (209 aa)). The EF-hand domain occupies 412–447 (GKEAEAEECFTMLDRDGNGDISLDEIILAISEIGRT). Residues aspartate 425, aspartate 427, asparagine 429, aspartate 431, and glutamate 436 each contribute to the Ca(2+) site. A helical membrane pass occupies residues 469–489 (LATIAFIIAVLVFVSFVTSGF). The Lumenal segment spans residues 490 to 502 (GTVIAAGATSLLS). The helical transmembrane segment at 503–523 (LSFVFATTAQEVLGSCIFLFV) threads the bilayer. Over 524–943 (KHPFDIGDRV…QRRNYESRRL (420 aa)) the chain is Cytoplasmic. A disordered region spans residues 677–943 (PGAAAEDAAA…QRRNYESRRL (267 aa)). 2 stretches are compositionally biased toward low complexity: residues 678 to 687 (GAAAEDAAAA) and 744 to 759 (GASATAATGNNSAGSA). The segment covering 760-781 (YSETTLNNTVSEPYQRSFTPNT) has biased composition (polar residues). The segment covering 798-810 (TERHLGVSHDSIA) has biased composition (basic and acidic residues). The segment covering 827 to 842 (TTANQSLASPTTMQSE) has biased composition (polar residues). Positions 857–880 (PSSSQYSQQYPQQQSQSPYSYTYS) are enriched in low complexity. A compositionally biased stretch (polar residues) spans 886 to 904 (PESSLQPLEHTTSYNQSLP). A compositionally biased stretch (basic and acidic residues) spans 916 to 943 (NSLEGHSPHVDPRHMTEEQRRNYESRRL).

Belongs to the MscS (TC 1.A.23) family.

It is found in the cell membrane. The catalysed reaction is Ca(2+)(in) = Ca(2+)(out). Its function is as follows. Acts as a mechanosensitive calcium channel in response to membrane stretch. Regulates intracellular calcium levels and cell volume for survival in response to hypo-osmotic shock. Involved in maintaining vacuole integrity and protecting the nuclear envelope upon hypo-osmotic shock. seems to contribute to CaCl2 toxicityIn contracstz to mscA, mscB seems to contribute to CaCl(2) toxicity. The sequence is that of Mechanosensitive ion channel protein BA from Emericella nidulans (strain FGSC A4 / ATCC 38163 / CBS 112.46 / NRRL 194 / M139) (Aspergillus nidulans).